Here is a 518-residue protein sequence, read N- to C-terminus: Light-independent protochlorophyllide reductase subunit B (518 aa).

[4Fe-4S] cluster is bound at residue aspartate 36. Catalysis depends on aspartate 299, which acts as the Proton donor. 434-435 is a binding site for substrate; sequence GM.

This sequence belongs to the ChlB/BchB/BchZ family. As to quaternary structure, protochlorophyllide reductase is composed of three subunits; ChlL, ChlN and ChlB. Forms a heterotetramer of two ChlB and two ChlN subunits. [4Fe-4S] cluster serves as cofactor.

It localises to the plastid. Its subcellular location is the chloroplast. The catalysed reaction is chlorophyllide a + oxidized 2[4Fe-4S]-[ferredoxin] + 2 ADP + 2 phosphate = protochlorophyllide a + reduced 2[4Fe-4S]-[ferredoxin] + 2 ATP + 2 H2O. It participates in porphyrin-containing compound metabolism; chlorophyll biosynthesis (light-independent). Component of the dark-operative protochlorophyllide reductase (DPOR) that uses Mg-ATP and reduced ferredoxin to reduce ring D of protochlorophyllide (Pchlide) to form chlorophyllide a (Chlide). This reaction is light-independent. The NB-protein (ChlN-ChlB) is the catalytic component of the complex. The polypeptide is Light-independent protochlorophyllide reductase subunit B (Adiantum capillus-veneris (Maidenhair fern)).